The following is an 87-amino-acid chain: Sec-independent protein translocase protein TatA (87 aa).

Residues 1–21 form a helical membrane-spanning segment; that stretch reads MGGISIWQLLIIALIIVLLFG. Residues 54–87 form a disordered region; sequence NTEADADFEQKTLSKEEQQSEDPVQKSQKDKEQV.

The protein belongs to the TatA/E family. In terms of assembly, the Tat system comprises two distinct complexes: a TatABC complex, containing multiple copies of TatA, TatB and TatC subunits, and a separate TatA complex, containing only TatA subunits. Substrates initially bind to the TatABC complex, which probably triggers association of the separate TatA complex to form the active translocon.

It is found in the cell inner membrane. Functionally, part of the twin-arginine translocation (Tat) system that transports large folded proteins containing a characteristic twin-arginine motif in their signal peptide across membranes. TatA could form the protein-conducting channel of the Tat system. The polypeptide is Sec-independent protein translocase protein TatA (Photobacterium profundum (strain SS9)).